A 371-amino-acid chain; its full sequence is Phospho-N-acetylmuramoyl-pentapeptide-transferase (371 aa).

The next 9 helical transmembrane spans lie at 25 to 45, 77 to 94, 136 to 156, 172 to 192, 204 to 224, 240 to 260, 269 to 289, 296 to 316, and 348 to 368; these read TLLA…WLIA, MGGL…ALWA, IGWQ…HPAS, LIPH…IVGF, GLAI…AYVA, GTGE…AFLW, FMGD…AFMI, VIVG…VGVF, and KVVL…LATL.

Belongs to the glycosyltransferase 4 family. MraY subfamily. It depends on Mg(2+) as a cofactor.

The protein localises to the cell inner membrane. The catalysed reaction is UDP-N-acetyl-alpha-D-muramoyl-L-alanyl-gamma-D-glutamyl-meso-2,6-diaminopimeloyl-D-alanyl-D-alanine + di-trans,octa-cis-undecaprenyl phosphate = di-trans,octa-cis-undecaprenyl diphospho-N-acetyl-alpha-D-muramoyl-L-alanyl-D-glutamyl-meso-2,6-diaminopimeloyl-D-alanyl-D-alanine + UMP. It participates in cell wall biogenesis; peptidoglycan biosynthesis. In terms of biological role, catalyzes the initial step of the lipid cycle reactions in the biosynthesis of the cell wall peptidoglycan: transfers peptidoglycan precursor phospho-MurNAc-pentapeptide from UDP-MurNAc-pentapeptide onto the lipid carrier undecaprenyl phosphate, yielding undecaprenyl-pyrophosphoryl-MurNAc-pentapeptide, known as lipid I. In Opitutus terrae (strain DSM 11246 / JCM 15787 / PB90-1), this protein is Phospho-N-acetylmuramoyl-pentapeptide-transferase.